Here is a 174-residue protein sequence, read N- to C-terminus: Phytochrome-interacting ankyrin-repeat protein 2 (174 aa).

The span at 1 to 13 (MLQEPSAAFSLRR) shows a compositional bias: low complexity. The segment at 1 to 29 (MLQEPSAAFSLRRNSFRRRSPRSNVDDRG) is disordered. Ser-15 is subject to Phosphoserine. 3 ANK repeats span residues 28–57 (RGWN…DVNA), 65–94 (KGVS…NIDA), and 100–129 (CGWT…FLAD).

Interacts with phytochrome A (PHYA), both in Pr and Pfr forms. Binds to PIF3, a repressor of photomorphogenesis in response to phytochrome-mediated light signaling; this interaction may trigger the repression of PHYA-mediated PIF3 phosphorylation. Interacts with SIGE/SIG5 in mitochondrion. Interacts with RPS9M (via C terminus). Post-translationally, phosphorylated by PHYA. Mostly expressed in flowers, cotyledons, leaves and siliques, and, to a lower extent, in roots and stems. Also detected at low levels in seedlings grown in continuous dark or light conditions. Expressed in male and female gametophytes.

It localises to the cytoplasm. It is found in the nucleus. The protein localises to the mitochondrion. Functionally, promotes anthocyanin accumulation through interaction with PHYA, especially in response to far-red light, high light and sucrose treatment, probably by triggering A3G2XYLT/UF3GT expression. Required for gametophytes development as well as male-female gamete recognition during fertilization, possibly by regulating mitochondrial gene expression. Represses PHYA-mediated PIF3 phosphorylation. This chain is Phytochrome-interacting ankyrin-repeat protein 2, found in Arabidopsis thaliana (Mouse-ear cress).